Here is a 1218-residue protein sequence, read N- to C-terminus: ATP-dependent helicase/deoxyribonuclease subunit B (1218 aa).

One can recognise a UvrD-like helicase ATP-binding domain in the interval 1–279 (MRFIVGRAGT…VFLTETHRFE (279 aa)). 6-13 (GRAGTGKS) serves as a coordination point for ATP. Positions 281-588 (AGLKHLERFY…LVGSLDRSRN (308 aa)) constitute a UvrD-like helicase C-terminal domain. Cysteine 786 lines the [4Fe-4S] cluster pocket. The interval 987 to 1006 (LAEGSKGSEGSEGSEDSEDS) is disordered. [4Fe-4S] cluster contacts are provided by cysteine 1126, cysteine 1129, and cysteine 1135. Residues 1160 to 1169 (RVQSQDSEQY) show a composition bias toward polar residues. The tract at residues 1160 to 1218 (RVQSQDSEQYPEQHPPTSVPGETSRRALQKDGGNSPRGQELIWLGEDEAGAGKEDDGHE) is disordered. A compositionally biased stretch (basic and acidic residues) spans 1209-1218 (GAGKEDDGHE).

It belongs to the helicase family. AddB/RexB type 1 subfamily. In terms of assembly, heterodimer of AddA and AddB. Mg(2+) serves as cofactor. Requires [4Fe-4S] cluster as cofactor.

The heterodimer acts as both an ATP-dependent DNA helicase and an ATP-dependent, dual-direction single-stranded exonuclease. Recognizes the chi site generating a DNA molecule suitable for the initiation of homologous recombination. The AddB subunit has 5' -&gt; 3' nuclease activity but not helicase activity. The protein is ATP-dependent helicase/deoxyribonuclease subunit B of Desulfitobacterium hafniense (strain DSM 10664 / DCB-2).